Consider the following 819-residue polypeptide: Zinc finger protein with KRAB and SCAN domains 5 (819 aa).

The SCAN box domain occupies 51 to 132 (QRFKHFQYHE…AVIESIQREL (82 aa)). Residues Lys214, Lys246, and Lys302 each participate in a glycyl lysine isopeptide (Lys-Gly) (interchain with G-Cter in SUMO2) cross-link. In terms of domain architecture, KRAB spans 216–287 (EDVADVAVSF…HWVAAERTEK (72 aa)). 2 disordered regions span residues 236–263 (SQKS…KEGN) and 283–340 (ERTE…GERG). A compositionally biased stretch (basic and acidic residues) spans 240–249 (LGRDSRKEDC). Basic and acidic residues predominate over residues 329-340 (VNRKQKSNGERG). C2H2-type zinc fingers lie at residues 341–363 (HRCG…RRIH), 369–391 (FKCG…QRVH), 397–419 (YKCQ…HSVH), 425–447 (YGCN…LKRH), 540–562 (HQCN…RRIH), 568–590 (FRCE…HRVH), 596–618 (YACH…QSVH), 624–646 (FKCN…LRLH), and 652–674 (HQCH…QVLH). Residue Lys700 forms a Glycyl lysine isopeptide (Lys-Gly) (interchain with G-Cter in SUMO2) linkage. 3 consecutive C2H2-type zinc fingers follow at residues 708 to 730 (YQCD…YRTH), 764 to 786 (HQCN…QRIH), and 792 to 814 (LQCK…LRSH). Residue Lys776 forms a Glycyl lysine isopeptide (Lys-Gly) (interchain with G-Cter in SUMO2) linkage.

It belongs to the krueppel C2H2-type zinc-finger protein family. Testis specific.

The protein resides in the nucleus. In terms of biological role, may be involved in transcriptional regulation. The sequence is that of Zinc finger protein with KRAB and SCAN domains 5 (Zkscan5) from Mus musculus (Mouse).